The following is a 639-amino-acid chain: Elongation factor 4 (639 aa).

The tr-type G domain occupies 39–220; the sequence is AQIRNFCIIA…EVVRLVPPPT (182 aa). GTP-binding positions include 51 to 56 and 167 to 170; these read DHGKST and NKID.

This sequence belongs to the TRAFAC class translation factor GTPase superfamily. Classic translation factor GTPase family. LepA subfamily.

The protein resides in the cell membrane. The enzyme catalyses GTP + H2O = GDP + phosphate + H(+). Required for accurate and efficient protein synthesis under certain stress conditions. May act as a fidelity factor of the translation reaction, by catalyzing a one-codon backward translocation of tRNAs on improperly translocated ribosomes. Back-translocation proceeds from a post-translocation (POST) complex to a pre-translocation (PRE) complex, thus giving elongation factor G a second chance to translocate the tRNAs correctly. Binds to ribosomes in a GTP-dependent manner. The polypeptide is Elongation factor 4 (Mycobacterium sp. (strain JLS)).